A 253-amino-acid polypeptide reads, in one-letter code: Aspartate/glutamate leucyltransferase (253 aa).

The protein belongs to the R-transferase family. Bpt subfamily.

Its subcellular location is the cytoplasm. It catalyses the reaction N-terminal L-glutamyl-[protein] + L-leucyl-tRNA(Leu) = N-terminal L-leucyl-L-glutamyl-[protein] + tRNA(Leu) + H(+). It carries out the reaction N-terminal L-aspartyl-[protein] + L-leucyl-tRNA(Leu) = N-terminal L-leucyl-L-aspartyl-[protein] + tRNA(Leu) + H(+). Functions in the N-end rule pathway of protein degradation where it conjugates Leu from its aminoacyl-tRNA to the N-termini of proteins containing an N-terminal aspartate or glutamate. This Allorhizobium ampelinum (strain ATCC BAA-846 / DSM 112012 / S4) (Agrobacterium vitis (strain S4)) protein is Aspartate/glutamate leucyltransferase.